The primary structure comprises 281 residues: MEIWYTEKLELEKGRAVSYRVTKTIESLQSPFQKIDIFETQSFGRMFTLDGVTMVTNKDEHSYHEMIAHIPMMSHPNPESVLVIGGGDGGTVREVLKHPSVKEVVLCEIDKAVVDISYKYFPECADAMKDPKVIHHYDDGAKFARDNKGRFDVILVDSSDPVGPAEVLFKEPFFRDMASALKPTGIIATQAESFWYHGDVITSLFEFIPKIFPEYGYYYTTIPTYPSGIIGFTFLSNAIDPYAVTPDPKRVPKGLKYYSPEIHKAAFVLPEFAKAYIKRKG.

The PABS domain occupies 2–237; the sequence is EIWYTEKLEL…GIIGFTFLSN (236 aa). Gln33 lines the S-methyl-5'-thioadenosine pocket. Spermidine is bound by residues His64 and Asp88. S-methyl-5'-thioadenosine contacts are provided by residues Glu108 and 139-140; that span reads DG. Asp157 functions as the Proton acceptor in the catalytic mechanism. 157–160 serves as a coordination point for spermidine; the sequence is DSSD. Position 164 (Pro164) interacts with S-methyl-5'-thioadenosine.

This sequence belongs to the spermidine/spermine synthase family. As to quaternary structure, homodimer or homotetramer.

It localises to the cytoplasm. It carries out the reaction S-adenosyl 3-(methylsulfanyl)propylamine + putrescine = S-methyl-5'-thioadenosine + spermidine + H(+). It functions in the pathway amine and polyamine biosynthesis; spermidine biosynthesis; spermidine from putrescine: step 1/1. In terms of biological role, catalyzes the irreversible transfer of a propylamine group from the amino donor S-adenosylmethioninamine (decarboxy-AdoMet) to putrescine (1,4-diaminobutane) to yield spermidine. This is Polyamine aminopropyltransferase from Leptospira biflexa serovar Patoc (strain Patoc 1 / Ames).